A 299-amino-acid chain; its full sequence is Phosphatidylserine decarboxylase proenzyme (299 aa).

Catalysis depends on charge relay system; for autoendoproteolytic cleavage activity residues aspartate 90, histidine 147, and serine 254. Residue serine 254 is the Schiff-base intermediate with substrate; via pyruvic acid; for decarboxylase activity of the active site. Residue serine 254 is modified to Pyruvic acid (Ser); by autocatalysis.

This sequence belongs to the phosphatidylserine decarboxylase family. PSD-B subfamily. Prokaryotic type I sub-subfamily. Heterodimer of a large membrane-associated beta subunit and a small pyruvoyl-containing alpha subunit. The cofactor is pyruvate. Is synthesized initially as an inactive proenzyme. Formation of the active enzyme involves a self-maturation process in which the active site pyruvoyl group is generated from an internal serine residue via an autocatalytic post-translational modification. Two non-identical subunits are generated from the proenzyme in this reaction, and the pyruvate is formed at the N-terminus of the alpha chain, which is derived from the carboxyl end of the proenzyme. The autoendoproteolytic cleavage occurs by a canonical serine protease mechanism, in which the side chain hydroxyl group of the serine supplies its oxygen atom to form the C-terminus of the beta chain, while the remainder of the serine residue undergoes an oxidative deamination to produce ammonia and the pyruvoyl prosthetic group on the alpha chain. During this reaction, the Ser that is part of the protease active site of the proenzyme becomes the pyruvoyl prosthetic group, which constitutes an essential element of the active site of the mature decarboxylase.

The protein localises to the cell membrane. It carries out the reaction a 1,2-diacyl-sn-glycero-3-phospho-L-serine + H(+) = a 1,2-diacyl-sn-glycero-3-phosphoethanolamine + CO2. It participates in phospholipid metabolism; phosphatidylethanolamine biosynthesis; phosphatidylethanolamine from CDP-diacylglycerol: step 2/2. Its function is as follows. Catalyzes the formation of phosphatidylethanolamine (PtdEtn) from phosphatidylserine (PtdSer). The sequence is that of Phosphatidylserine decarboxylase proenzyme from Erwinia tasmaniensis (strain DSM 17950 / CFBP 7177 / CIP 109463 / NCPPB 4357 / Et1/99).